Reading from the N-terminus, the 214-residue chain is ATP phosphoribosyltransferase (214 aa).

Belongs to the ATP phosphoribosyltransferase family. Short subfamily. In terms of assembly, heteromultimer composed of HisG and HisZ subunits.

The protein localises to the cytoplasm. The enzyme catalyses 1-(5-phospho-beta-D-ribosyl)-ATP + diphosphate = 5-phospho-alpha-D-ribose 1-diphosphate + ATP. Its pathway is amino-acid biosynthesis; L-histidine biosynthesis; L-histidine from 5-phospho-alpha-D-ribose 1-diphosphate: step 1/9. In terms of biological role, catalyzes the condensation of ATP and 5-phosphoribose 1-diphosphate to form N'-(5'-phosphoribosyl)-ATP (PR-ATP). Has a crucial role in the pathway because the rate of histidine biosynthesis seems to be controlled primarily by regulation of HisG enzymatic activity. This chain is ATP phosphoribosyltransferase, found in Leptothrix cholodnii (strain ATCC 51168 / LMG 8142 / SP-6) (Leptothrix discophora (strain SP-6)).